The sequence spans 236 residues: 2,3,4,5-tetrahydropyridine-2,6-dicarboxylate N-acetyltransferase (236 aa).

The protein belongs to the transferase hexapeptide repeat family. DapH subfamily.

The enzyme catalyses (S)-2,3,4,5-tetrahydrodipicolinate + acetyl-CoA + H2O = L-2-acetamido-6-oxoheptanedioate + CoA. The protein operates within amino-acid biosynthesis; L-lysine biosynthesis via DAP pathway; LL-2,6-diaminopimelate from (S)-tetrahydrodipicolinate (acetylase route): step 1/3. Functionally, catalyzes the transfer of an acetyl group from acetyl-CoA to tetrahydrodipicolinate. This chain is 2,3,4,5-tetrahydropyridine-2,6-dicarboxylate N-acetyltransferase, found in Clostridium botulinum (strain Okra / Type B1).